Consider the following 102-residue polypeptide: MYAIIETGGKQIKVVEGQEIYVEKVTADVNESVTFDKVLFIGGDDVKVGAPLIDGATVTAKVEKHGRQKKIDVHKFKPKKNYHRKQGHRQPYTKLVIDKINA.

It belongs to the bacterial ribosomal protein bL21 family. Part of the 50S ribosomal subunit. Contacts protein L20.

Its function is as follows. This protein binds to 23S rRNA in the presence of protein L20. The protein is Large ribosomal subunit protein bL21 of Oceanobacillus iheyensis (strain DSM 14371 / CIP 107618 / JCM 11309 / KCTC 3954 / HTE831).